A 595-amino-acid chain; its full sequence is Chaperone protein HscA homolog (595 aa).

The protein belongs to the heat shock protein 70 family.

Chaperone involved in the maturation of iron-sulfur cluster-containing proteins. Has a low intrinsic ATPase activity which is markedly stimulated by HscB. In Rickettsia akari (strain Hartford), this protein is Chaperone protein HscA homolog.